The sequence spans 318 residues: MSNIIKYKKKILNGDLLTKEEVEELLEEGITDLAATANEIREFLCGNKFDLCTIINGKSGRCQENCKYCAQSSYFDTDIIEYNILHSDRIINSGISNYNKGVHRFSVVTSGRALNNNEVDTLCKTYSKLKEICSIRLCASHGLLKYEDLKRLKDSGVTRYHNNLETSKSFFKNICTTHTYNDKIETIKNAKKAGLEICSGGIIGLGETMEDRIDMAFTLRELSVESVPVNILNPIKGTPLENQEILSYEEIIKTLALFRFILPTVQIRLAGGRALLSDKGKKVLESGVNGAISGDMLTTLGIETSEDIKMIKNLGFEV.

One can recognise a Radical SAM core domain in the interval 44 to 273 (LCGNKFDLCT…TVQIRLAGGR (230 aa)). Positions 62, 66, and 69 each coordinate [4Fe-4S] cluster. The [2Fe-2S] cluster site is built by Ser106, Cys138, Cys198, and Arg268.

The protein belongs to the radical SAM superfamily. Biotin synthase family. In terms of assembly, homodimer. Requires [4Fe-4S] cluster as cofactor. [2Fe-2S] cluster is required as a cofactor.

The catalysed reaction is (4R,5S)-dethiobiotin + (sulfur carrier)-SH + 2 reduced [2Fe-2S]-[ferredoxin] + 2 S-adenosyl-L-methionine = (sulfur carrier)-H + biotin + 2 5'-deoxyadenosine + 2 L-methionine + 2 oxidized [2Fe-2S]-[ferredoxin]. Its pathway is cofactor biosynthesis; biotin biosynthesis; biotin from 7,8-diaminononanoate: step 2/2. In terms of biological role, catalyzes the conversion of dethiobiotin (DTB) to biotin by the insertion of a sulfur atom into dethiobiotin via a radical-based mechanism. This is Biotin synthase from Clostridium botulinum (strain Loch Maree / Type A3).